The following is a 116-amino-acid chain: MRHKHGYRKLNRTSAHRAALLKNLSIALTKEGKIETTLPKAKELRSYYEKLITKAASGDFNAHRAIFAMLQHKESTNTIVNEIAPKYADRNGGYTRIIKTRMRKGDSAPMAIIELV.

Belongs to the bacterial ribosomal protein bL17 family. In terms of assembly, part of the 50S ribosomal subunit. Contacts protein L32.

In Sulfurovum sp. (strain NBC37-1), this protein is Large ribosomal subunit protein bL17.